Here is a 294-residue protein sequence, read N- to C-terminus: tRNA dimethylallyltransferase (294 aa).

Residue 10 to 17 participates in ATP binding; it reads GPTAVGKT. 12-17 contacts substrate; that stretch reads TAVGKT. Residues 35 to 38 form an interaction with substrate tRNA region; that stretch reads DSQQ.

This sequence belongs to the IPP transferase family. As to quaternary structure, monomer. Requires Mg(2+) as cofactor.

It carries out the reaction adenosine(37) in tRNA + dimethylallyl diphosphate = N(6)-dimethylallyladenosine(37) in tRNA + diphosphate. In terms of biological role, catalyzes the transfer of a dimethylallyl group onto the adenine at position 37 in tRNAs that read codons beginning with uridine, leading to the formation of N6-(dimethylallyl)adenosine (i(6)A). This is tRNA dimethylallyltransferase from Streptococcus sanguinis (strain SK36).